A 374-amino-acid polypeptide reads, in one-letter code: MADFYQILGVSRDADANTLKSAYRKLARQYHPDVNKDPGAEDKFKEIGKAYEALADPETRARYDQFGEAGIGGAAGMPDMGDMGGFGDLFETFFNGFGGQSSQGGRSQRRGPQQGDDLRYDLNIDFKDAIFGQQREINIPHLETCEVCRGTGAKKGTGPTTCTTCGGSGQVRRATRTPFGNFTQVAECPTCNGVGQIISDPCTSCGGNGVKQVRKKLRINIPAGVDSGTKLRVSGEGNVGLKGGPPGDLYVFIKVKNDSNLKREGINIYSEISVSYLQAILGDTVDIITVDGKVNLKIPSGTQPNSTLSLENKGVPRLGNPVARGNHQVLVKVKLPTRITEDERNLLEDLASKYTEQNSSSNSGLFSRLFGKDS.

The region spanning 3-67 (DFYQILGVSR…ETRARYDQFG (65 aa)) is the J domain. The interval 99–118 (GQSSQGGRSQRRGPQQGDDL) is disordered. The segment covering 103–115 (QGGRSQRRGPQQG) has biased composition (low complexity). Residues 132–214 (GQQREINIPH…CGGNGVKQVR (83 aa)) form a CR-type zinc finger. Positions 145, 148, 162, 165, 188, 191, 202, and 205 each coordinate Zn(2+). CXXCXGXG motif repeat units lie at residues 145–152 (CEVCRGTG), 162–169 (CTTCGGSG), 188–195 (CPTCNGVG), and 202–209 (CTSCGGNG).

The protein belongs to the DnaJ family. Homodimer. Zn(2+) serves as cofactor.

The protein localises to the cytoplasm. Functionally, participates actively in the response to hyperosmotic and heat shock by preventing the aggregation of stress-denatured proteins and by disaggregating proteins, also in an autonomous, DnaK-independent fashion. Unfolded proteins bind initially to DnaJ; upon interaction with the DnaJ-bound protein, DnaK hydrolyzes its bound ATP, resulting in the formation of a stable complex. GrpE releases ADP from DnaK; ATP binding to DnaK triggers the release of the substrate protein, thus completing the reaction cycle. Several rounds of ATP-dependent interactions between DnaJ, DnaK and GrpE are required for fully efficient folding. Also involved, together with DnaK and GrpE, in the DNA replication of plasmids through activation of initiation proteins. The protein is Chaperone protein DnaJ of Prochlorococcus marinus subsp. pastoris (strain CCMP1986 / NIES-2087 / MED4).